Consider the following 110-residue polypeptide: Class I hydrophobin 2 (110 aa).

Residues 1 to 17 (MQFKFLTTVALATLAVA) form the signal peptide. Disulfide bonds link cysteine 28-cysteine 89, cysteine 36-cysteine 83, cysteine 37-cysteine 71, and cysteine 90-cysteine 103. N-linked (GlcNAc...) asparagine glycosylation is present at asparagine 57.

It belongs to the fungal hydrophobin family. As to quaternary structure, self-assembles to form functional amyloid fibrils called rodlets. Self-assembly into fibrillar rodlets occurs spontaneously at hydrophobic:hydrophilic interfaces and the rodlets further associate laterally to form amphipathic monolayers.

The protein localises to the secreted. The protein resides in the cell wall. Its function is as follows. Aerial growth, conidiation, and dispersal of filamentous fungi in the environment rely upon a capability of their secreting small amphipathic proteins called hydrophobins (HPBs) with low sequence identity. Class I can self-assemble into an outermost layer of rodlet bundles on aerial cell surfaces, conferring cellular hydrophobicity that supports fungal growth, development and dispersal; whereas Class II form highly ordered films at water-air interfaces through intermolecular interactions but contribute nothing to the rodlet structure. CoH2 is an asexual monokaryon-specific class I hydrophobin that is involved in aerial growth of mycelia. The sequence is that of Class I hydrophobin 2 from Coprinopsis cinerea (Inky cap fungus).